The following is a 275-amino-acid chain: Large ribosomal subunit protein uL2 (275 aa).

Residues 223-275 (VAMNPIDHPHGGGEGRTGEAREPVSPWGTPSKGYKTRRNKRTNNMIVQRRKRK) form a disordered region. Basic and acidic residues predominate over residues 229–244 (DHPHGGGEGRTGEARE).

The protein belongs to the universal ribosomal protein uL2 family. As to quaternary structure, part of the 50S ribosomal subunit. Forms a bridge to the 30S subunit in the 70S ribosome.

Its function is as follows. One of the primary rRNA binding proteins. Required for association of the 30S and 50S subunits to form the 70S ribosome, for tRNA binding and peptide bond formation. It has been suggested to have peptidyltransferase activity; this is somewhat controversial. Makes several contacts with the 16S rRNA in the 70S ribosome. This chain is Large ribosomal subunit protein uL2, found in Bordetella avium (strain 197N).